The following is a 460-amino-acid chain: Argininosuccinate lyase (460 aa).

The protein belongs to the lyase 1 family. Argininosuccinate lyase subfamily.

Its subcellular location is the cytoplasm. It catalyses the reaction 2-(N(omega)-L-arginino)succinate = fumarate + L-arginine. It participates in amino-acid biosynthesis; L-arginine biosynthesis; L-arginine from L-ornithine and carbamoyl phosphate: step 3/3. The sequence is that of Argininosuccinate lyase from Campylobacter hominis (strain ATCC BAA-381 / DSM 21671 / CCUG 45161 / LMG 19568 / NCTC 13146 / CH001A).